Here is a 286-residue protein sequence, read N- to C-terminus: Diaminopimelate epimerase (286 aa).

Residues Asn13 and Asn66 each contribute to the substrate site. The active-site Proton donor is Cys75. Substrate contacts are provided by residues 76–77 (GN), Asn165, Asn198, and 216–217 (ER). Cys225 acts as the Proton acceptor in catalysis. A substrate-binding site is contributed by 226–227 (GT).

Belongs to the diaminopimelate epimerase family. Homodimer.

It is found in the cytoplasm. The enzyme catalyses (2S,6S)-2,6-diaminopimelate = meso-2,6-diaminopimelate. It participates in amino-acid biosynthesis; L-lysine biosynthesis via DAP pathway; DL-2,6-diaminopimelate from LL-2,6-diaminopimelate: step 1/1. In terms of biological role, catalyzes the stereoinversion of LL-2,6-diaminopimelate (L,L-DAP) to meso-diaminopimelate (meso-DAP), a precursor of L-lysine and an essential component of the bacterial peptidoglycan. The protein is Diaminopimelate epimerase of Thermosynechococcus vestitus (strain NIES-2133 / IAM M-273 / BP-1).